Here is a 93-residue protein sequence, read N- to C-terminus: MATFKKFNKDKRPKRNTQSLLFKRKRFCRFTVAGVEEIDYKDIDTLRDFISENGKIIPARLTGTRAIYQRQLNTAIKRARFLAMVPYSDQHRV.

It belongs to the bacterial ribosomal protein bS18 family. As to quaternary structure, part of the 30S ribosomal subunit. Forms a tight heterodimer with protein bS6.

Its function is as follows. Binds as a heterodimer with protein bS6 to the central domain of the 16S rRNA, where it helps stabilize the platform of the 30S subunit. The chain is Small ribosomal subunit protein bS18 from Variovorax paradoxus (strain S110).